The chain runs to 156 residues: Small ribosomal subunit protein uS7 (156 aa).

Belongs to the universal ribosomal protein uS7 family. Part of the 30S ribosomal subunit. Contacts proteins S9 and S11.

In terms of biological role, one of the primary rRNA binding proteins, it binds directly to 16S rRNA where it nucleates assembly of the head domain of the 30S subunit. Is located at the subunit interface close to the decoding center, probably blocks exit of the E-site tRNA. In Hamiltonella defensa subsp. Acyrthosiphon pisum (strain 5AT), this protein is Small ribosomal subunit protein uS7.